Here is a 445-residue protein sequence, read N- to C-terminus: MDEQGRLMQARGVGIPGLPIHGGPQTLTPHPMHEPPTDNGEPRKQDIGDILQQIMTITDQSLDEAQAKKHALNCHRMKPALFSVLCEIKEKTGLSIRNSQEEEPVDPQLMRLDNMLLAEGVAGPEKGGGSAAAAAAAAASGGVSPDNSIEHSDYRNKLSQIRQIYHAELEKYEQACNEFTTHVMNLLREQSRTRPISPKEIERMVGIIHRKFSSIQMQLKQSTCEAVMILRSRFLDARRKRRNFSKQATEVLNEYFYSHLSNPYPSEEAKEELAKKCSITVSQVSNWFGNKRIRYKKNIGKFQEEANIYAVKTAVSVTQGGHSGANSPTTPTSAGSGGSFNLSGSNDMFMAMQGFRCTARGRSGQMEGGKKLSPLRLSPRPQKDLAVSTLTPRTELFILCAPSVYQTRLFTWTKPLPRLTPILWNYQGEGLWKSTLPLPPSLPSN.

Positions valine 13–lysine 44 are disordered. Over residues proline 31 to lysine 44 the composition is skewed to basic and acidic residues. One can recognise a PBC domain in the interval proline 42–aspartate 236. The segment at aspartate 49–glycine 128 is PBC-A. Residues alanine 131 to aspartate 236 are PBC-B. Positions alanine 237–isoleucine 299 form a DNA-binding region, homeobox; TALE-type. A compositionally biased stretch (polar residues) spans glutamine 319 to threonine 332. The interval glutamine 319–glycine 338 is disordered.

This sequence belongs to the TALE/PBX homeobox family.

The protein localises to the nucleus. Functionally, transcriptional activator that binds the sequence 5'-ATCAATCAA-3'. The sequence is that of Pre-B-cell leukemia transcription factor 2 (pbx2) from Xenopus laevis (African clawed frog).